Here is an 898-residue protein sequence, read N- to C-terminus: Coiled-coil domain-containing protein 186 (898 aa).

Disordered stretches follow at residues 1 to 43, 68 to 95, and 702 to 749; these read MSET…NESK, NYIPDHGGGEDSCAKTDTGSENSEQIAN, and RRKL…SSVA. Ser-2 is subject to N-acetylserine. Polar residues predominate over residues 82-95; that stretch reads KTDTGSENSEQIAN. Positions 201–712 form a coiled coil; sequence KYLQQEHIIK…RKLDQVESGS (512 aa). Basic and acidic residues predominate over residues 703 to 717; the sequence is RKLDQVESGSYDKEV. Over residues 718–734 the composition is skewed to low complexity; sequence SSMGSRSSSSGSLNARS. Ser-740 is modified (phosphoserine). Coiled coils occupy residues 759–803 and 855–894; these read AMLI…IQSY and KLQAVLEDTLLKNITLKENLQTLGTEIERLIKHQHELEQR.

This chain is Coiled-coil domain-containing protein 186 (CCDC186), found in Homo sapiens (Human).